The chain runs to 197 residues: Probable GTP-binding protein EngB (197 aa).

An EngB-type G domain is found at K22–F195. GTP contacts are provided by residues G30 to S37, G57 to L61, D75 to G78, T142 to D145, and F174 to S176. Residues S37 and T59 each coordinate Mg(2+).

Belongs to the TRAFAC class TrmE-Era-EngA-EngB-Septin-like GTPase superfamily. EngB GTPase family. Mg(2+) is required as a cofactor.

Necessary for normal cell division and for the maintenance of normal septation. This is Probable GTP-binding protein EngB from Clostridium kluyveri (strain ATCC 8527 / DSM 555 / NBRC 12016 / NCIMB 10680 / K1).